A 430-amino-acid polypeptide reads, in one-letter code: ATP-dependent protease ATPase subunit HslU (430 aa).

ATP contacts are provided by residues V18, 60 to 65 (GVGKTE), D243, E308, and R380.

This sequence belongs to the ClpX chaperone family. HslU subfamily. A double ring-shaped homohexamer of HslV is capped on each side by a ring-shaped HslU homohexamer. The assembly of the HslU/HslV complex is dependent on binding of ATP.

The protein localises to the cytoplasm. ATPase subunit of a proteasome-like degradation complex; this subunit has chaperone activity. The binding of ATP and its subsequent hydrolysis by HslU are essential for unfolding of protein substrates subsequently hydrolyzed by HslV. HslU recognizes the N-terminal part of its protein substrates and unfolds these before they are guided to HslV for hydrolysis. The polypeptide is ATP-dependent protease ATPase subunit HslU (Caulobacter vibrioides (strain ATCC 19089 / CIP 103742 / CB 15) (Caulobacter crescentus)).